Reading from the N-terminus, the 446-residue chain is Phosphoglucosamine mutase (446 aa).

Serine 101 serves as the catalytic Phosphoserine intermediate. Mg(2+)-binding residues include serine 101, aspartate 240, aspartate 242, and aspartate 244. Residue serine 101 is modified to Phosphoserine.

Belongs to the phosphohexose mutase family. It depends on Mg(2+) as a cofactor. In terms of processing, activated by phosphorylation.

The enzyme catalyses alpha-D-glucosamine 1-phosphate = D-glucosamine 6-phosphate. Catalyzes the conversion of glucosamine-6-phosphate to glucosamine-1-phosphate. The chain is Phosphoglucosamine mutase from Coxiella burnetii (strain RSA 331 / Henzerling II).